Reading from the N-terminus, the 207-residue chain is Probable GTP-binding protein EngB (207 aa).

One can recognise an EngB-type G domain in the interval 24-199 (GGYEVAFAGR…RGIVGGWLGL (176 aa)). Residues 32–39 (GRSNAGKS), 59–63 (GRTQQ), 77–80 (DLPG), 144–147 (TKAD), and 178–180 (YSG) contribute to the GTP site. Residues Ser39 and Thr61 each coordinate Mg(2+).

Belongs to the TRAFAC class TrmE-Era-EngA-EngB-Septin-like GTPase superfamily. EngB GTPase family. It depends on Mg(2+) as a cofactor.

Necessary for normal cell division and for the maintenance of normal septation. The sequence is that of Probable GTP-binding protein EngB from Xanthomonas campestris pv. campestris (strain 8004).